Reading from the N-terminus, the 558-residue chain is CTP synthase (558 aa).

Residues 1 to 270 (MTKYVFVTGG…DDLICRELDL (270 aa)) are amidoligase domain. Ser13 contributes to the CTP binding site. Ser13 serves as a coordination point for UTP. ATP-binding positions include 14–19 (SLGKGI) and Asp71. Mg(2+)-binding residues include Asp71 and Glu144. Residues 151–153 (DIE), 191–196 (KTKPTQ), and Lys227 contribute to the CTP site. UTP-binding positions include 191–196 (KTKPTQ) and Lys227. In terms of domain architecture, Glutamine amidotransferase type-1 spans 295–547 (TIGMVGKYVE…ISAALEHQKK (253 aa)). L-glutamine is bound at residue Gly356. Residue Cys383 is the Nucleophile; for glutamine hydrolysis of the active site. Residues 384–387 (LGMQ), Glu407, and Arg473 each bind L-glutamine. Catalysis depends on residues His520 and Glu522.

This sequence belongs to the CTP synthase family. As to quaternary structure, homotetramer.

The enzyme catalyses UTP + L-glutamine + ATP + H2O = CTP + L-glutamate + ADP + phosphate + 2 H(+). It carries out the reaction L-glutamine + H2O = L-glutamate + NH4(+). It catalyses the reaction UTP + NH4(+) + ATP = CTP + ADP + phosphate + 2 H(+). It participates in pyrimidine metabolism; CTP biosynthesis via de novo pathway; CTP from UDP: step 2/2. Allosterically activated by GTP, when glutamine is the substrate; GTP has no effect on the reaction when ammonia is the substrate. The allosteric effector GTP functions by stabilizing the protein conformation that binds the tetrahedral intermediate(s) formed during glutamine hydrolysis. Inhibited by the product CTP, via allosteric rather than competitive inhibition. Functionally, catalyzes the ATP-dependent amination of UTP to CTP with either L-glutamine or ammonia as the source of nitrogen. Regulates intracellular CTP levels through interactions with the four ribonucleotide triphosphates. The polypeptide is CTP synthase (Polynucleobacter necessarius subsp. necessarius (strain STIR1)).